The primary structure comprises 278 residues: Potassium/proton antiporter CemA (278 aa).

Transmembrane regions (helical) follow at residues 61–81 (ILLL…FVFG), 155–175 (AVKN…LMIT), 203–223 (IILF…EVII), and 238–258 (FIFL…KYWI).

It belongs to the CemA family.

The protein localises to the plastid. The protein resides in the chloroplast inner membrane. The catalysed reaction is K(+)(in) + H(+)(out) = K(+)(out) + H(+)(in). In terms of biological role, contributes to K(+)/H(+) antiport activity by supporting proton efflux to control proton extrusion and homeostasis in chloroplasts in a light-dependent manner to modulate photosynthesis. Prevents excessive induction of non-photochemical quenching (NPQ) under continuous-light conditions. Indirectly promotes efficient inorganic carbon uptake into chloroplasts. The polypeptide is Potassium/proton antiporter CemA (Pyropia yezoensis (Susabi-nori)).